A 485-amino-acid chain; its full sequence is Glutamyl-tRNA(Gln) amidotransferase subunit A (485 aa).

Catalysis depends on charge relay system residues K78 and S153. Catalysis depends on S177, which acts as the Acyl-ester intermediate.

This sequence belongs to the amidase family. GatA subfamily. As to quaternary structure, heterotrimer of A, B and C subunits.

The enzyme catalyses L-glutamyl-tRNA(Gln) + L-glutamine + ATP + H2O = L-glutaminyl-tRNA(Gln) + L-glutamate + ADP + phosphate + H(+). Allows the formation of correctly charged Gln-tRNA(Gln) through the transamidation of misacylated Glu-tRNA(Gln) in organisms which lack glutaminyl-tRNA synthetase. The reaction takes place in the presence of glutamine and ATP through an activated gamma-phospho-Glu-tRNA(Gln). The polypeptide is Glutamyl-tRNA(Gln) amidotransferase subunit A (Bacillus cereus (strain ZK / E33L)).